A 351-amino-acid polypeptide reads, in one-letter code: Probable dual-specificity RNA methyltransferase RlmN (351 aa).

Glutamate 98 (proton acceptor) is an active-site residue. Residues 104 to 332 (TQKRLTVCVS…ASIRRSRGLD (229 aa)) form the Radical SAM core domain. An intrachain disulfide couples cysteine 111 to cysteine 337. [4Fe-4S] cluster contacts are provided by cysteine 118, cysteine 122, and cysteine 125. S-adenosyl-L-methionine is bound by residues 165–166 (GE), serine 195, 218–220 (SLH), and asparagine 294. Cysteine 337 acts as the S-methylcysteine intermediate in catalysis.

This sequence belongs to the radical SAM superfamily. RlmN family. [4Fe-4S] cluster serves as cofactor.

The protein resides in the cytoplasm. The catalysed reaction is adenosine(2503) in 23S rRNA + 2 reduced [2Fe-2S]-[ferredoxin] + 2 S-adenosyl-L-methionine = 2-methyladenosine(2503) in 23S rRNA + 5'-deoxyadenosine + L-methionine + 2 oxidized [2Fe-2S]-[ferredoxin] + S-adenosyl-L-homocysteine. It carries out the reaction adenosine(37) in tRNA + 2 reduced [2Fe-2S]-[ferredoxin] + 2 S-adenosyl-L-methionine = 2-methyladenosine(37) in tRNA + 5'-deoxyadenosine + L-methionine + 2 oxidized [2Fe-2S]-[ferredoxin] + S-adenosyl-L-homocysteine. Specifically methylates position 2 of adenine 2503 in 23S rRNA and position 2 of adenine 37 in tRNAs. The chain is Probable dual-specificity RNA methyltransferase RlmN from Acaryochloris marina (strain MBIC 11017).